We begin with the raw amino-acid sequence, 261 residues long: Mediator of RNA polymerase II transcription subunit 7 (261 aa).

2 disordered regions span residues 1-55 and 224-250; these read MAEA…TPAE and DSASKSGENDTAKRTTGDQDANNANSS. Basic and acidic residues-rich tracts occupy residues 23 to 45 and 230 to 240; these read FTPDNLKRLEEVKKEASKGEDGK and GENDTAKRTTG. Positions 241–250 are enriched in polar residues; sequence DQDANNANSS.

The protein belongs to the Mediator complex subunit 7 family. In terms of assembly, component of the Mediator complex.

It is found in the nucleus. Its function is as follows. Component of the Mediator complex, a coactivator involved in the regulated transcription of nearly all RNA polymerase II-dependent genes. Mediator functions as a bridge to convey information from gene-specific regulatory proteins to the basal RNA polymerase II transcription machinery. Mediator is recruited to promoters by direct interactions with regulatory proteins and serves as a scaffold for the assembly of a functional preinitiation complex with RNA polymerase II and the general transcription factors. This is Mediator of RNA polymerase II transcription subunit 7 (med7) from Neosartorya fischeri (strain ATCC 1020 / DSM 3700 / CBS 544.65 / FGSC A1164 / JCM 1740 / NRRL 181 / WB 181) (Aspergillus fischerianus).